Reading from the N-terminus, the 101-residue chain is NADH-quinone oxidoreductase subunit K (101 aa).

3 helical membrane-spanning segments follow: residues 4–24, 30–50, and 61–81; these read LAHY…GIFL, IIIL…FVAF, and IFVF…LAIL.

The protein belongs to the complex I subunit 4L family. In terms of assembly, NDH-1 is composed of 14 different subunits. Subunits NuoA, H, J, K, L, M, N constitute the membrane sector of the complex.

Its subcellular location is the cell inner membrane. The catalysed reaction is a quinone + NADH + 5 H(+)(in) = a quinol + NAD(+) + 4 H(+)(out). In terms of biological role, NDH-1 shuttles electrons from NADH, via FMN and iron-sulfur (Fe-S) centers, to quinones in the respiratory chain. The immediate electron acceptor for the enzyme in this species is believed to be ubiquinone. Couples the redox reaction to proton translocation (for every two electrons transferred, four hydrogen ions are translocated across the cytoplasmic membrane), and thus conserves the redox energy in a proton gradient. The protein is NADH-quinone oxidoreductase subunit K of Paraburkholderia phymatum (strain DSM 17167 / CIP 108236 / LMG 21445 / STM815) (Burkholderia phymatum).